Here is a 110-residue protein sequence, read N- to C-terminus: Iron-sulfur cluster assembly protein CyaY (110 aa).

Belongs to the frataxin family.

In terms of biological role, involved in iron-sulfur (Fe-S) cluster assembly. May act as a regulator of Fe-S biogenesis. This is Iron-sulfur cluster assembly protein CyaY from Variovorax paradoxus (strain S110).